Consider the following 341-residue polypeptide: L-threonine 3-dehydrogenase (341 aa).

Cys38 contributes to the Zn(2+) binding site. Residues Thr40 and His43 each act as charge relay system in the active site. The Zn(2+) site is built by His63, Glu64, Cys93, Cys96, Cys99, and Cys107. NAD(+) contacts are provided by residues Ile175, Asp195, Arg200, 262–264 (LGI), and 286–287 (IY).

Belongs to the zinc-containing alcohol dehydrogenase family. As to quaternary structure, homotetramer. Requires Zn(2+) as cofactor.

The protein localises to the cytoplasm. It catalyses the reaction L-threonine + NAD(+) = (2S)-2-amino-3-oxobutanoate + NADH + H(+). Its pathway is amino-acid degradation; L-threonine degradation via oxydo-reductase pathway; glycine from L-threonine: step 1/2. In terms of biological role, catalyzes the NAD(+)-dependent oxidation of L-threonine to 2-amino-3-ketobutyrate. The polypeptide is L-threonine 3-dehydrogenase (Klebsiella pneumoniae subsp. pneumoniae (strain ATCC 700721 / MGH 78578)).